A 125-amino-acid chain; its full sequence is Fluoride-specific ion channel FluC (125 aa).

The next 4 helical transmembrane spans lie at F5–F25, F33–W53, F69–G89, and I101–L121. Residues G76 and T79 each coordinate Na(+).

This sequence belongs to the fluoride channel Fluc/FEX (TC 1.A.43) family.

The protein localises to the cell inner membrane. It carries out the reaction fluoride(in) = fluoride(out). Na(+) is not transported, but it plays an essential structural role and its presence is essential for fluoride channel function. Functionally, fluoride-specific ion channel. Important for reducing fluoride concentration in the cell, thus reducing its toxicity. The chain is Fluoride-specific ion channel FluC from Desulforapulum autotrophicum (strain ATCC 43914 / DSM 3382 / VKM B-1955 / HRM2) (Desulfobacterium autotrophicum).